Consider the following 315-residue polypeptide: Homoserine kinase (315 aa).

Residue 97-107 coordinates ATP; that stretch reads PPARGLGSSAT.

Belongs to the GHMP kinase family. Homoserine kinase subfamily.

It is found in the cytoplasm. It carries out the reaction L-homoserine + ATP = O-phospho-L-homoserine + ADP + H(+). It participates in amino-acid biosynthesis; L-threonine biosynthesis; L-threonine from L-aspartate: step 4/5. Its function is as follows. Catalyzes the ATP-dependent phosphorylation of L-homoserine to L-homoserine phosphate. This Prochlorococcus marinus (strain MIT 9215) protein is Homoserine kinase.